We begin with the raw amino-acid sequence, 372 residues long: Probable leucine aminopeptidase MCYG_03459 (372 aa).

Positions 1-18 (MKISTLAVVSAFAVTAIA) are cleaved as a signal peptide. An N-linked (GlcNAc...) asparagine glycan is attached at Asn95. The Zn(2+) site is built by His175 and Asp194. N-linked (GlcNAc...) asparagine glycans are attached at residues Asn195 and Asn219. 2 residues coordinate Zn(2+): Glu233 and Asp260. A disulfide bond links Cys305 and Cys309. Residue His338 coordinates Zn(2+).

The protein belongs to the peptidase M28 family. M28E subfamily. In terms of assembly, monomer. Requires Zn(2+) as cofactor.

The protein localises to the secreted. Functionally, probable extracellular aminopeptidase which contributes to pathogenicity. The chain is Probable leucine aminopeptidase MCYG_03459 from Arthroderma otae (strain ATCC MYA-4605 / CBS 113480) (Microsporum canis).